The sequence spans 238 residues: Aliphatic sulfonates import ATP-binding protein SsuB (238 aa).

Residues 7 to 221 (VSLHQVHQQF…RPGDAAFASL (215 aa)) form the ABC transporter domain. 39–46 (GRSGSGKT) provides a ligand contact to ATP.

The protein belongs to the ABC transporter superfamily. Aliphatic sulfonates importer (TC 3.A.1.17.2) family. As to quaternary structure, the complex is composed of two ATP-binding proteins (SsuB), two transmembrane proteins (SsuC) and a solute-binding protein (SsuA).

It localises to the cell inner membrane. The enzyme catalyses ATP + H2O + aliphatic sulfonate-[sulfonate-binding protein]Side 1 = ADP + phosphate + aliphatic sulfonateSide 2 + [sulfonate-binding protein]Side 1.. Its function is as follows. Part of the ABC transporter complex SsuABC involved in aliphatic sulfonates import. Responsible for energy coupling to the transport system. This Granulibacter bethesdensis (strain ATCC BAA-1260 / CGDNIH1) protein is Aliphatic sulfonates import ATP-binding protein SsuB.